The following is a 434-amino-acid chain: AT-rich interactive domain-containing protein 5 (434 aa).

Positions 1–120 (MMADTEMQEQ…SSPHVPEESV (120 aa)) are disordered. 3 stretches are compositionally biased toward basic and acidic residues: residues 25-37 (ELEK…ERPK), 43-54 (DTTHTLDSDVHL), and 78-90 (RNGD…KKIT). Residues 92–102 (DGGQEETTLGE) show a composition bias toward polar residues. The region spanning 142 to 233 (PQDQEAFIKE…ALLEYEKHLR (92 aa)) is the ARID domain. Positions 237–274 (ELNLPGSASLPSSGIEKEASSHQASGSGRTRRDAAARA) are disordered. The region spanning 336–434 (AEVIDVGPPA…RLFVRVPFEQ (99 aa)) is the sHSP domain.

This sequence belongs to the small heat shock protein (HSP20) family.

Its subcellular location is the nucleus. The polypeptide is AT-rich interactive domain-containing protein 5 (ARID5) (Arabidopsis thaliana (Mouse-ear cress)).